Reading from the N-terminus, the 905-residue chain is Protein translocase subunit SecA (905 aa).

ATP is bound by residues Gln87, Gly105–Thr109, and Asp512. Residues Asp836–Leu905 are disordered. Basic and acidic residues predominate over residues Asp841–Gln858. Zn(2+) is bound by residues Cys890, Cys892, Cys901, and His902. The span at Lys896 to Leu905 shows a compositional bias: basic residues.

Belongs to the SecA family. In terms of assembly, monomer and homodimer. Part of the essential Sec protein translocation apparatus which comprises SecA, SecYEG and auxiliary proteins SecDF-YajC and YidC. It depends on Zn(2+) as a cofactor.

It localises to the cell inner membrane. The protein resides in the cytoplasm. The enzyme catalyses ATP + H2O + cellular proteinSide 1 = ADP + phosphate + cellular proteinSide 2.. Part of the Sec protein translocase complex. Interacts with the SecYEG preprotein conducting channel. Has a central role in coupling the hydrolysis of ATP to the transfer of proteins into and across the cell membrane, serving both as a receptor for the preprotein-SecB complex and as an ATP-driven molecular motor driving the stepwise translocation of polypeptide chains across the membrane. This is Protein translocase subunit SecA from Idiomarina loihiensis (strain ATCC BAA-735 / DSM 15497 / L2-TR).